We begin with the raw amino-acid sequence, 487 residues long: Glutamyl-tRNA(Gln) amidotransferase subunit A (487 aa).

Catalysis depends on charge relay system residues Lys80 and Ser155. The Acyl-ester intermediate role is filled by Ser179.

This sequence belongs to the amidase family. GatA subfamily. As to quaternary structure, heterotrimer of A, B and C subunits.

It carries out the reaction L-glutamyl-tRNA(Gln) + L-glutamine + ATP + H2O = L-glutaminyl-tRNA(Gln) + L-glutamate + ADP + phosphate + H(+). In terms of biological role, allows the formation of correctly charged Gln-tRNA(Gln) through the transamidation of misacylated Glu-tRNA(Gln) in organisms which lack glutaminyl-tRNA synthetase. The reaction takes place in the presence of glutamine and ATP through an activated gamma-phospho-Glu-tRNA(Gln). The polypeptide is Glutamyl-tRNA(Gln) amidotransferase subunit A (Leptospira interrogans serogroup Icterohaemorrhagiae serovar copenhageni (strain Fiocruz L1-130)).